The chain runs to 102 residues: Co-chaperonin GroES (102 aa).

It belongs to the GroES chaperonin family. In terms of assembly, heptamer of 7 subunits arranged in a ring. Interacts with the chaperonin GroEL.

It is found in the cytoplasm. Together with the chaperonin GroEL, plays an essential role in assisting protein folding. The GroEL-GroES system forms a nano-cage that allows encapsulation of the non-native substrate proteins and provides a physical environment optimized to promote and accelerate protein folding. GroES binds to the apical surface of the GroEL ring, thereby capping the opening of the GroEL channel. This chain is Co-chaperonin GroES, found in Chlamydia muridarum (strain MoPn / Nigg).